Consider the following 289-residue polypeptide: Pseudouridine-5'-phosphate glycosidase (289 aa).

Glu-10 functions as the Proton donor in the catalytic mechanism. Lys-71 and Val-91 together coordinate substrate. Asp-121 serves as a coordination point for Mn(2+). 123 to 125 (SQD) lines the substrate pocket. The Nucleophile role is filled by Lys-142.

This sequence belongs to the pseudouridine-5'-phosphate glycosidase family. As to quaternary structure, homotrimer. The cofactor is Mn(2+).

The catalysed reaction is D-ribose 5-phosphate + uracil = psi-UMP + H2O. Catalyzes the reversible cleavage of pseudouridine 5'-phosphate (PsiMP) to ribose 5-phosphate and uracil. Functions biologically in the cleavage direction, as part of a pseudouridine degradation pathway. The polypeptide is Pseudouridine-5'-phosphate glycosidase (Kosmotoga olearia (strain ATCC BAA-1733 / DSM 21960 / TBF 19.5.1)).